A 375-amino-acid polypeptide reads, in one-letter code: Killer cell immunoglobulin-like receptor 2DL5B (375 aa).

The N-terminal stretch at 1–21 (MSLMVVSMACVGFFLLQGAWT) is a signal peptide. Topologically, residues 22–238 (HEGGQDKPLL…PSSKTGIRRH (217 aa)) are extracellular. Ig-like C2-type domains are found at residues 42 to 102 (GGHV…HPRS) and 137 to 200 (GENV…LHDS). Cystine bridges form between Cys49–Cys95 and Cys144–Cys193. The tract at residues 213–233 (VSVTGNSSSSSSSPTEPSSKT) is disordered. Residue Asn218 is glycosylated (N-linked (GlcNAc...) asparagine). Over residues 219 to 231 (SSSSSSSPTEPSS) the composition is skewed to low complexity. Residues 239-259 (LHILIGTSVAIILFIILFFFL) form a helical membrane-spanning segment. At 260–375 (LHCCCSNKKN…ASSHVPAAGI (116 aa)) the chain is on the cytoplasmic side. The tract at residues 334-375 (AKPRSLSPAHKHHSQALRGSSRETTALSQNRVASSHVPAAGI) is disordered. Over residues 355–366 (RETTALSQNRVA) the composition is skewed to polar residues.

Belongs to the immunoglobulin superfamily.

Its subcellular location is the cell membrane. Its function is as follows. Receptor on natural killer (NK) cells for HLA-C alleles. Inhibits the activity of NK cells thus preventing cell lysis. In Homo sapiens (Human), this protein is Killer cell immunoglobulin-like receptor 2DL5B (KIR2DL5B).